A 270-amino-acid polypeptide reads, in one-letter code: Myelin protein zero-like protein 1 (270 aa).

The N-terminal stretch at 1–35 (MAEAVGAVALIAAPARRRWLWSVLAAMLGLLTARI) is a signal peptide. Residues 36–151 (SALEVHTPKE…DIVVRPGHIR (116 aa)) enclose the Ig-like V-type domain. The Extracellular segment spans residues 36–162 (SALEVHTPKE…HVVEIDNLLV (127 aa)). N-linked (GlcNAc...) asparagine glycans are attached at residues Asn50 and Asn130. An intrachain disulfide couples Cys58 to Cys135. A helical membrane pass occupies residues 163 to 183 (FLVWVVVGTVTAVVLGLTLLI). Topologically, residues 184 to 270 (SLVLVVLYRR…SVVYADIRKD (87 aa)) are cytoplasmic. Residues 201–257 (TGCSTSERLSPVKQAPRKCPSDTEGLVKSPPSAGSHQGPVIYAQLDHSGGHHSGKIN) form a disordered region. Phosphoserine is present on residues Ser204, Ser206, Ser210, and Ser221. The ITIM motif 1 signature appears at 240-245 (VIYAQL). Tyr242 bears the Phosphotyrosine mark. Ser261 bears the Phosphoserine mark. The ITIM motif 2 signature appears at 262-267 (VVYADI). Tyr264 bears the Phosphotyrosine mark.

It belongs to the myelin P0 protein family. Interacts with phosphorylated PTPN11/SHP-2. Phosphorylated on tyrosine residues upon stimulation with pervanadate and concanavalin-A (ConA). Phosphorylation at Tyr-242 and Tyr-264 is required for interaction with PTPN11/SHP-2. Dephosphorylated by PTPN11/SHP-2 (in vitro).

It is found in the membrane. Functionally, cell surface receptor, which is involved in signal transduction processes. Recruits PTPN11/SHP-2 to the cell membrane and is a putative substrate of PTPN11/SHP-2. Is a major receptor for concanavalin-A (ConA) and is involved in cellular signaling induced by ConA, which probably includes Src family tyrosine-protein kinases. Isoform 2 seems to have a dominant negative role; it blocks tyrosine phosphorylation of MPZL1 induced by ConA. Isoform 1, but not isoform 2, may be involved in regulation of integrin-mediated cell motility. This chain is Myelin protein zero-like protein 1 (Mpzl1), found in Mus musculus (Mouse).